The chain runs to 315 residues: Methionyl-tRNA formyltransferase (315 aa).

A (6S)-5,6,7,8-tetrahydrofolate-binding site is contributed by serine 107–proline 110.

The protein belongs to the Fmt family.

It catalyses the reaction L-methionyl-tRNA(fMet) + (6R)-10-formyltetrahydrofolate = N-formyl-L-methionyl-tRNA(fMet) + (6S)-5,6,7,8-tetrahydrofolate + H(+). Attaches a formyl group to the free amino group of methionyl-tRNA(fMet). The formyl group appears to play a dual role in the initiator identity of N-formylmethionyl-tRNA by promoting its recognition by IF2 and preventing the misappropriation of this tRNA by the elongation apparatus. This is Methionyl-tRNA formyltransferase from Borreliella afzelii (strain PKo) (Borrelia afzelii).